A 150-amino-acid polypeptide reads, in one-letter code: Histone H2B.2 (150 aa).

Residues 1–16 (MAPKAEKKPAAKKPAE) show a composition bias toward basic and acidic residues. The tract at residues 1–57 (MAPKAEKKPAAKKPAEEEPAAEKAPAGKKPKAEKRVPAGKSAGKEGGEGKRGRKKGK) is disordered. 2 positions are modified to N6-acetyllysine: K7 and K34. Residue K146 forms a Glycyl lysine isopeptide (Lys-Gly) (interchain with G-Cter in ubiquitin) linkage.

This sequence belongs to the histone H2B family. As to quaternary structure, the nucleosome is a histone octamer containing two molecules each of H2A, H2B, H3 and H4 assembled in one H3-H4 heterotetramer and two H2A-H2B heterodimers. The octamer wraps approximately 147 bp of DNA. In terms of processing, can be acetylated to form H2BK6ac and H2BK33ac. Monoubiquitinated to form H2BK143ub1; may give a specific tag for epigenetic transcriptional activation.

The protein localises to the nucleus. It is found in the chromosome. Functionally, core component of nucleosome. Nucleosomes wrap and compact DNA into chromatin, limiting DNA accessibility to the cellular machineries which require DNA as a template. Histones thereby play a central role in transcription regulation, DNA repair, DNA replication and chromosomal stability. DNA accessibility is regulated via a complex set of post-translational modifications of histones, also called histone code, and nucleosome remodeling. This is Histone H2B.2 from Zea mays (Maize).